A 453-amino-acid chain; its full sequence is UDP-N-acetylmuramate--L-alanine ligase (453 aa).

112–118 (GTHGKTT) contacts ATP.

This sequence belongs to the MurCDEF family.

The protein resides in the cytoplasm. The catalysed reaction is UDP-N-acetyl-alpha-D-muramate + L-alanine + ATP = UDP-N-acetyl-alpha-D-muramoyl-L-alanine + ADP + phosphate + H(+). Its pathway is cell wall biogenesis; peptidoglycan biosynthesis. Functionally, cell wall formation. This chain is UDP-N-acetylmuramate--L-alanine ligase, found in Bdellovibrio bacteriovorus (strain ATCC 15356 / DSM 50701 / NCIMB 9529 / HD100).